The chain runs to 99 residues: UPF0213 protein SP_1535 (99 aa).

The 76-residue stretch at 3-78 (HKAYMYVLEC…KRKKRPQKEE (76 aa)) folds into the GIY-YIG domain.

Belongs to the UPF0213 family.

The protein is UPF0213 protein SP_1535 of Streptococcus pneumoniae serotype 4 (strain ATCC BAA-334 / TIGR4).